A 301-amino-acid chain; its full sequence is Acetylglutamate kinase (301 aa).

Residues 68–69 (GG), R90, and N195 each bind substrate.

Belongs to the acetylglutamate kinase family. ArgB subfamily.

It is found in the cytoplasm. The enzyme catalyses N-acetyl-L-glutamate + ATP = N-acetyl-L-glutamyl 5-phosphate + ADP. The protein operates within amino-acid biosynthesis; L-arginine biosynthesis; N(2)-acetyl-L-ornithine from L-glutamate: step 2/4. In terms of biological role, catalyzes the ATP-dependent phosphorylation of N-acetyl-L-glutamate. The protein is Acetylglutamate kinase of Ectopseudomonas mendocina (strain ymp) (Pseudomonas mendocina).